A 219-amino-acid polypeptide reads, in one-letter code: Uracil-DNA glycosylase (219 aa).

Residue Asp-64 is the Proton acceptor of the active site.

Belongs to the uracil-DNA glycosylase (UDG) superfamily. UNG family.

The protein resides in the cytoplasm. It carries out the reaction Hydrolyzes single-stranded DNA or mismatched double-stranded DNA and polynucleotides, releasing free uracil.. In terms of biological role, excises uracil residues from the DNA which can arise as a result of misincorporation of dUMP residues by DNA polymerase or due to deamination of cytosine. This chain is Uracil-DNA glycosylase, found in Leuconostoc citreum (strain KM20).